We begin with the raw amino-acid sequence, 232 residues long: Nucleolar protein 16 (232 aa).

The segment covering 1–14 (MGRELQKRKKRSSR) has biased composition (basic residues). 2 disordered regions span residues 1–20 (MGRE…VQTH) and 113–161 (RSDN…QSSR). The span at 132–154 (EEPKPKNPTHDIEWHGISDDRQE) shows a compositional bias: basic and acidic residues.

The protein belongs to the NOP16 family. In terms of assembly, component of the pre-66S ribosomal particle.

Its subcellular location is the nucleus. The protein localises to the nucleolus. Involved in the biogenesis of the 60S ribosomal subunit. In Neurospora crassa (strain ATCC 24698 / 74-OR23-1A / CBS 708.71 / DSM 1257 / FGSC 987), this protein is Nucleolar protein 16 (nop-16).